The chain runs to 142 residues: Large ribosomal subunit protein uL13 (142 aa).

Belongs to the universal ribosomal protein uL13 family. As to quaternary structure, part of the 50S ribosomal subunit.

Functionally, this protein is one of the early assembly proteins of the 50S ribosomal subunit, although it is not seen to bind rRNA by itself. It is important during the early stages of 50S assembly. The chain is Large ribosomal subunit protein uL13 from Ectopseudomonas mendocina (strain ymp) (Pseudomonas mendocina).